An 82-amino-acid polypeptide reads, in one-letter code: Cysteine proteinase inhibitor A (82 aa).

The protein belongs to the cystatin family.

Its function is as follows. Strong inhibitor of papain and ficin but poor inhibitor of cathepsin H, B and L. The sequence is that of Cysteine proteinase inhibitor A from Helianthus annuus (Common sunflower).